A 338-amino-acid polypeptide reads, in one-letter code: Ferredoxin--NADP reductase (338 aa).

FAD-binding residues include D35, Q43, Y48, A88, F122, D289, and T330.

The protein belongs to the ferredoxin--NADP reductase type 2 family. In terms of assembly, homodimer. It depends on FAD as a cofactor.

It catalyses the reaction 2 reduced [2Fe-2S]-[ferredoxin] + NADP(+) + H(+) = 2 oxidized [2Fe-2S]-[ferredoxin] + NADPH. The polypeptide is Ferredoxin--NADP reductase (Ehrlichia chaffeensis (strain ATCC CRL-10679 / Arkansas)).